A 298-amino-acid chain; its full sequence is Glutamyl-Q tRNA(Asp) synthetase (298 aa).

Residues 9–13 and E45 each bind L-glutamate; that span reads RFAPS. The 'HIGH' region motif lies at 12–22; it reads PSPSGELHFGS. Positions 101, 103, 115, and 119 each coordinate Zn(2+). Residues Y172 and R190 each coordinate L-glutamate. Positions 228–232 match the 'KMSKS' region motif; the sequence is KLSKQ. Residue K231 participates in ATP binding.

It belongs to the class-I aminoacyl-tRNA synthetase family. GluQ subfamily. Zn(2+) is required as a cofactor.

Its function is as follows. Catalyzes the tRNA-independent activation of glutamate in presence of ATP and the subsequent transfer of glutamate onto a tRNA(Asp). Glutamate is transferred on the 2-amino-5-(4,5-dihydroxy-2-cyclopenten-1-yl) moiety of the queuosine in the wobble position of the QUC anticodon. This is Glutamyl-Q tRNA(Asp) synthetase from Citrobacter koseri (strain ATCC BAA-895 / CDC 4225-83 / SGSC4696).